The sequence spans 206 residues: Large ribosomal subunit protein bL25 (206 aa).

This sequence belongs to the bacterial ribosomal protein bL25 family. CTC subfamily. In terms of assembly, part of the 50S ribosomal subunit; part of the 5S rRNA/L5/L18/L25 subcomplex. Contacts the 5S rRNA. Binds to the 5S rRNA independently of L5 and L18.

In terms of biological role, this is one of the proteins that binds to the 5S RNA in the ribosome where it forms part of the central protuberance. This Ralstonia nicotianae (strain ATCC BAA-1114 / GMI1000) (Ralstonia solanacearum) protein is Large ribosomal subunit protein bL25.